The chain runs to 290 residues: Type II secretion system protein C (290 aa).

Over 1 to 28 (MTLPFRDDLLSSLLARCKTVPLSRFSQP) the chain is Cytoplasmic. A helical membrane pass occupies residues 29-46 (LFWLLLLLLAHQCAGLTW). Over 47–290 (RLLDLGSQQS…LYDVYVGLSE (244 aa)) the chain is Periplasmic.

Belongs to the GSP C family.

It localises to the cell inner membrane. Functionally, involved in a type II secretion system (T2SS, formerly general secretion pathway, GSP) for the export of proteins. The protein is Type II secretion system protein C (exeC) of Aeromonas salmonicida.